The sequence spans 586 residues: Proline--tRNA ligase (586 aa).

Belongs to the class-II aminoacyl-tRNA synthetase family. ProS type 1 subfamily. In terms of assembly, homodimer.

The protein localises to the cytoplasm. It carries out the reaction tRNA(Pro) + L-proline + ATP = L-prolyl-tRNA(Pro) + AMP + diphosphate. Its function is as follows. Catalyzes the attachment of proline to tRNA(Pro) in a two-step reaction: proline is first activated by ATP to form Pro-AMP and then transferred to the acceptor end of tRNA(Pro). As ProRS can inadvertently accommodate and process non-cognate amino acids such as alanine and cysteine, to avoid such errors it has two additional distinct editing activities against alanine. One activity is designated as 'pretransfer' editing and involves the tRNA(Pro)-independent hydrolysis of activated Ala-AMP. The other activity is designated 'posttransfer' editing and involves deacylation of mischarged Ala-tRNA(Pro). The misacylated Cys-tRNA(Pro) is not edited by ProRS. This is Proline--tRNA ligase from Leptospira biflexa serovar Patoc (strain Patoc 1 / Ames).